A 2166-amino-acid polypeptide reads, in one-letter code: Protein TIC236, chloroplastic (2166 aa).

The transit peptide at 1–37 (MSLRLQNPFLSTPLLHGSFNRREKRINVARRAFRSKR) directs the protein to the chloroplast. Topologically, residues 38–101 (IYSEKKQNDW…RSLAPVWEEG (64 aa)) are stromal. A helical transmembrane segment spans residues 102–122 (LFFLRCSVFFAVISGVCLLVW). Residues 123 to 2166 (YGQNKARVFV…LFEYSATSQD (2044 aa)) are Chloroplast intermembrane-facing. Residues 1611–1649 (MSEGEVSETDRGGAVKIPSWAKEKEDDEKRTSRDRSEER) form a disordered region. Positions 1631-1649 (AKEKEDDEKRTSRDRSEER) are enriched in basic and acidic residues.

Belongs to the TamB family. Part of the TIC complex, which can interact with components of the TOC complex to form a larger import complex. Interacts with the TOC complex component TOC75-3.

It localises to the plastid. The protein localises to the chloroplast inner membrane. The protein resides in the chloroplast intermembrane space. Its function is as follows. Part of the inner chloroplast membrane translocon complex (TIC) which associates with the outer chloroplast membrane translocon complex (TOC) and forms a supercomplex involved in protein precursor import into the chloroplast stroma. Required for the import of HSP93, TIC40 and RBCS protein precursors in the chloroplast stroma. Links the outer and inner membrane translocons of the chloroplast envelope. In Arabidopsis thaliana (Mouse-ear cress), this protein is Protein TIC236, chloroplastic.